A 1320-amino-acid chain; its full sequence is Collagen alpha-1(XX) chain (1320 aa).

The N-terminal stretch at 1–25 is a signal peptide; that stretch reads MSLQGSYQHFCLWMFLGTTLALGQG. A Fibronectin type-III 1 domain is found at 27 to 118; that stretch reads VSSRLRLAVL…EFVIEDLKSQ (92 aa). The 176-residue stretch at 177 to 352 folds into the VWFA domain; it reads DIIFLVDGSW…DTLAPLLSRL (176 aa). Fibronectin type-III domains are found at residues 377 to 466, 467 to 556, 557 to 644, 646 to 735, and 740 to 831; these read TPTR…APLP, PPGP…SALG, PPRH…TQKA, SPGQ…TPSA, and PPSS…ACPA. N433 is a glycosylation site (N-linked (GlcNAc...) asparagine). N-linked (GlcNAc...) asparagine glycans are attached at residues N569 and N604. Residues 728 to 752 form a disordered region; sequence SLRYTPSAASRSPPSSLALSSETPN. A compositionally biased stretch (low complexity) spans 733 to 748; sequence PSAASRSPPSSLALSS. N-linked (GlcNAc...) asparagine glycosylation is present at N771. In terms of domain architecture, Laminin G-like spans 840–1035; it reads GFDLMVAFGL…LQMLQIVCSD (196 aa). 2 disordered regions span residues 1064–1220 and 1291–1320; these read YSSE…EKGE and LRPE…ESLE. The span at 1069 to 1080 shows a compositional bias: pro residues; the sequence is PGPPGPQGPPGL. 3 Collagen-like domains span residues 1069–1122, 1125–1174, and 1165–1221; these read PGPP…TQGR, QGPM…GPAG, and GMRG…KGEP. Positions 1081 to 1093 are enriched in low complexity; it reads PGRNGPPGQQGHP. A compositionally biased stretch (gly residues) spans 1106–1115; it reads GPEGPGGQQG. A compositionally biased stretch (low complexity) spans 1140–1152; sequence QGLSGLQGLSGQQ. Polar residues predominate over residues 1302–1320; sequence ISHTSNPRLQEVQTPESLE.

It localises to the secreted. The protein localises to the extracellular space. Probable collagen protein. In Mus musculus (Mouse), this protein is Collagen alpha-1(XX) chain (Col20a1).